Consider the following 300-residue polypeptide: Cation-efflux pump FieF (300 aa).

A helical membrane pass occupies residues 24–44; sequence LLIKIFAWWYTGSVSILAALV. Residues aspartate 45 and aspartate 49 each contribute to the Zn(2+) site. Helical transmembrane passes span 82-102 and 114-134; these read AALA…LTSI and PGVG…LVTF. Residues histidine 153 and aspartate 157 each contribute to the Zn(2+) site. The next 2 helical transmembrane spans lie at 156-176 and 178-198; these read SDVM…YGWH and ADAL…LRMG.

Belongs to the cation diffusion facilitator (CDF) transporter (TC 2.A.4) family. FieF subfamily. Homodimer.

Its subcellular location is the cell inner membrane. It carries out the reaction Zn(2+)(in) + H(+)(out) = Zn(2+)(out) + H(+)(in). It catalyses the reaction Cd(2+)(in) + H(+)(out) = Cd(2+)(out) + H(+)(in). The enzyme catalyses Fe(2+)(in) + H(+)(out) = Fe(2+)(out) + H(+)(in). In terms of biological role, divalent metal cation transporter which exports Zn(2+), Cd(2+) and possibly Fe(2+). May be involved in zinc and iron detoxification by efflux. The polypeptide is Cation-efflux pump FieF (Salmonella enteritidis PT4 (strain P125109)).